A 336-amino-acid chain; its full sequence is HTH-type transcriptional repressor PurR (336 aa).

The region spanning 2–56 is the HTH lacI-type domain; sequence ATIKDVAKMAGVSTTTVSHVINKTRFVAKDTEEAVLSAIKQLNYSPSAVARSLKV. Positions 4–23 form a DNA-binding region, H-T-H motif; that stretch reads IKDVAKMAGVSTTTVSHVIN. The DNA-binding element occupies 48-56; that stretch reads SAVARSLKV. Hypoxanthine is bound by residues Tyr73, Lys188, Thr190, Phe219, and Asp273.

As to quaternary structure, homodimer.

The protein operates within purine metabolism; purine nucleotide biosynthesis [regulation]. In terms of biological role, is the main repressor of the genes involved in the de novo synthesis of purine nucleotides, regulating purB, purC, purEK, purF, purHD, purL, purMN and guaBA expression. PurR is allosterically activated to bind its cognate DNA by binding the purine corepressors, hypoxanthine or guanine, thereby effecting transcription repression. This chain is HTH-type transcriptional repressor PurR, found in Haemophilus influenzae (strain PittGG).